A 266-amino-acid chain; its full sequence is Putative deoxyribonuclease tatdn3 (266 aa).

The Zn(2+) site is built by His-9, His-11, Glu-103, His-143, His-166, and Asp-214.

It belongs to the metallo-dependent hydrolases superfamily. TatD-type hydrolase family. Requires Mn(2+) as cofactor. It depends on Ca(2+) as a cofactor. Mg(2+) is required as a cofactor. Zn(2+) serves as cofactor.

It is found in the nucleus. The 3'-exonuclease activity is sensitive to the metal ion present in the active site, whereas the AP endodeoxyribonuclease activity is observed in a variety of divalent metal cofactors. 3'-exoxonuclease activity is suppressed in the presence of Ca(2+), Zn(2+) and Ni(2+). In terms of biological role, exhibits 3'-exonuclease activities and apurinic/apyrimidinic (AP) endonuclease (in vitro). Show preferential AP endonuclease activity on double-stranded DNA substrates and 3'- exonuclease activity on single-stranded DNA. This is Putative deoxyribonuclease tatdn3 (tatdn3) from Danio rerio (Zebrafish).